Consider the following 131-residue polypeptide: Small ribosomal subunit protein uS8 (131 aa).

It belongs to the universal ribosomal protein uS8 family. Part of the 30S ribosomal subunit. Contacts proteins S5 and S12.

One of the primary rRNA binding proteins, it binds directly to 16S rRNA central domain where it helps coordinate assembly of the platform of the 30S subunit. This is Small ribosomal subunit protein uS8 from Chlorobium limicola (strain DSM 245 / NBRC 103803 / 6330).